The sequence spans 570 residues: Sulfite reductase [NADPH] hemoprotein beta-component (570 aa).

Positions 434, 440, 479, and 483 each coordinate [4Fe-4S] cluster. A siroheme-binding site is contributed by C483.

This sequence belongs to the nitrite and sulfite reductase 4Fe-4S domain family. In terms of assembly, alpha(8)-beta(8). The alpha component is a flavoprotein, the beta component is a hemoprotein. It depends on siroheme as a cofactor. Requires [4Fe-4S] cluster as cofactor.

The catalysed reaction is hydrogen sulfide + 3 NADP(+) + 3 H2O = sulfite + 3 NADPH + 4 H(+). It functions in the pathway sulfur metabolism; hydrogen sulfide biosynthesis; hydrogen sulfide from sulfite (NADPH route): step 1/1. In terms of biological role, component of the sulfite reductase complex that catalyzes the 6-electron reduction of sulfite to sulfide. This is one of several activities required for the biosynthesis of L-cysteine from sulfate. The sequence is that of Sulfite reductase [NADPH] hemoprotein beta-component from Escherichia fergusonii (strain ATCC 35469 / DSM 13698 / CCUG 18766 / IAM 14443 / JCM 21226 / LMG 7866 / NBRC 102419 / NCTC 12128 / CDC 0568-73).